A 420-amino-acid polypeptide reads, in one-letter code: MPLNANFPSKNYDYDYDLQPCFFFLEEENFYHQQSRLQPPAPSEDIWKKFELLPTPPLSPSRRSSQSSLFPSTADQLEMVTEFLGGDMVNQSFICEADDEALLKSIVIQDCMWSGFSAAAKLEKVVSEKLASYQASRKESALSTSQCQSQPPQSPLKSPSCDGSLNLGGTNRSSHEFLQDPSSDCVDPSVVFPYPLNDSISNASSPCQDLMLETPPISSNSSSSESEDEQEDDDDDEDCDEEEEIDVVTVEKRQTASRRMESGSHSQSSRPHHSPLVLKRCHVPIHQHNYAASPSTKVDYVSSKRAKLESNVRVLKQISNNRKCASPRSSDSEENDKRRTHNVLERQRRNELKLSFFALRDQVPRWRNNEKAPKVVILKKATEYAISMQEDERRLIRETEQLKYRKEQLKQRLQQLRNSV.

A 9aaTAD motif is present at residues Glu-78–Gly-86. Disordered stretches follow at residues Ala-141–Pro-181, Ala-203–Pro-275, and Ser-319–Glu-345. A compositionally biased stretch (low complexity) spans Ser-143 to Ser-160. Positions Cys-161–Arg-172 are enriched in polar residues. The span at Glu-225–Asp-246 shows a compositional bias: acidic residues. The span at Thr-249–Ser-262 shows a compositional bias: basic and acidic residues. The segment covering Ser-319–Ser-329 has biased composition (polar residues). The region spanning Asp-336–Met-388 is the bHLH domain. A leucine-zipper region spans residues Leu-395–Leu-416.

Efficient DNA binding requires dimerization with another bHLH protein. Binds DNA as a heterodimer with MAX.

It localises to the nucleus. Transcription factor that binds DNA in a non-specific manner, yet also specifically recognizes the core sequence 5'-CAC[GA]TG-3'. Activates the transcription of growth-related genes. This Xenopus laevis (African clawed frog) protein is Transcriptional regulator Myc-B (myc-b).